Here is a 319-residue protein sequence, read N- to C-terminus: Annexin A5 (319 aa).

A2 carries the post-translational modification N-acetylalanine. Annexin repeat units lie at residues 13–84, 85–156, 168–240, and 244–315; these read FDGR…ALMK, PSRL…VLLQ, AQVE…AVVK, and SIPA…LLCG. K27 is covalently cross-linked (Glycyl lysine isopeptide (Lys-Gly) (interchain with G-Cter in SUMO1); alternate). K27 participates in a covalent cross-link: Glycyl lysine isopeptide (Lys-Gly) (interchain with G-Cter in SUMO2); alternate. Phosphoserine is present on S35. Residues K68, K74, K77, K95, and K99 each carry the N6-acetyllysine modification. Residue K288 is modified to N6-succinyllysine. Positions 312–318 match the [IL]-x-C-x-x-[DE] motif motif; sequence LLCGGED.

Belongs to the annexin family. Monomer. Binds ATRX, EIF5B and DNMT1. In terms of processing, S-nitrosylation is induced by interferon-gamma and oxidatively-modified low-densitity lipoprotein (LDL(ox)) possibly implicating the iNOS-S100A8/9 transnitrosylase complex.

This protein is an anticoagulant protein that acts as an indirect inhibitor of the thromboplastin-specific complex, which is involved in the blood coagulation cascade. The protein is Annexin A5 (Anxa5) of Rattus norvegicus (Rat).